The following is a 529-amino-acid chain: Probable pectinesterase/pectinesterase inhibitor 35 (529 aa).

The N-terminal stretch at 1 to 34 (MATTSFSLPNHKFGIKLMLFLVLNLLSLQTSVFA) is a signal peptide. The segment at 36–180 (SSNSKFTKIS…TGLLTNSLDM (145 aa)) is pectinesterase inhibitor 35. The interval 42–64 (TKISRHPNSDSSSRTKPSTSSNK) is disordered. A compositionally biased stretch (low complexity) spans 50-64 (SDSSSRTKPSTSSNK). N-linked (GlcNAc...) asparagine glycans are attached at residues Asn86, Asn169, and Asn193. Positions 228 to 514 (HAVVAADGSG…FTVSGFIDGN (287 aa)) are pectinesterase 35. Residues Thr302 and Gln332 each coordinate substrate. Asp355 acts as the Proton donor; for pectinesterase activity in catalysis. Asp376 serves as the catalytic Nucleophile; for pectinesterase activity. Substrate contacts are provided by Arg434 and Trp436.

It in the N-terminal section; belongs to the PMEI family. In the C-terminal section; belongs to the pectinesterase family. In terms of tissue distribution, expressed in siliques.

The protein localises to the secreted. It localises to the cell wall. The enzyme catalyses [(1-&gt;4)-alpha-D-galacturonosyl methyl ester](n) + n H2O = [(1-&gt;4)-alpha-D-galacturonosyl](n) + n methanol + n H(+). It participates in glycan metabolism; pectin degradation; 2-dehydro-3-deoxy-D-gluconate from pectin: step 1/5. Its function is as follows. Acts in the modification of cell walls via demethylesterification of cell wall pectin. The sequence is that of Probable pectinesterase/pectinesterase inhibitor 35 (PME35) from Arabidopsis thaliana (Mouse-ear cress).